Here is a 76-residue protein sequence, read N- to C-terminus: Omega-scoloptoxin(15)-Ssd3c (76 aa).

A signal peptide spans 1–23 (MEKKIIFLVVLVALLALPEFISS).

This sequence belongs to the scoloptoxin-15 family. Contains 2 disulfide bonds. In terms of tissue distribution, expressed by the venom gland.

Its subcellular location is the secreted. Functionally, voltage-gated calcium channel inhibitor (Cav) (8.6% block at 10 nM), when tested on DRG neurons. In Scolopendra dehaani (Thai centipede), this protein is Omega-scoloptoxin(15)-Ssd3c.